A 470-amino-acid polypeptide reads, in one-letter code: Na(+)/H(+) antiporter NhaA 2 (470 aa).

11 helical membrane-spanning segments follow: residues 34–54, 85–105, 121–141, 150–170, 179–199, 202–222, 241–261, 317–337, 357–377, 395–415, and 423–443; these read FLHIEAASGILLLVAAAIALL, LEWVVNDGLMAIFFFVVGMEI, ALPAAAALGGMLVPAGLYLLL, GWGVPMATDIAFAVGILTLLG, VLLLALAVIDDLGAIIVIAVF, SGVAITGLLVAALGIVGVFAM, WAGVYSAGIHPTIAGVIIGLI, SLIATLHPWVAFGIMPVFALA, LATATGLLVGKPLGVIGACWL, LLVLGSTAGIGFTMALFIAQL, and LAAGKLGVLAASGAAAVVALV.

The protein belongs to the NhaA Na(+)/H(+) (TC 2.A.33) antiporter family.

It localises to the cell inner membrane. The catalysed reaction is Na(+)(in) + 2 H(+)(out) = Na(+)(out) + 2 H(+)(in). In terms of biological role, na(+)/H(+) antiporter that extrudes sodium in exchange for external protons. This chain is Na(+)/H(+) antiporter NhaA 2, found in Myxococcus xanthus (strain DK1622).